Consider the following 349-residue polypeptide: Draxin (349 aa).

The first 25 residues, 1–25 (MAGPAIHTAPMLFLVLLLPLELSLA), serve as a signal peptide directing secretion. Disordered stretches follow at residues 38-79 (PENH…QDGA), 118-145 (PYPEKENRPPGWERTRKRSREHKRRRDR), and 244-273 (DGWPSAKKKEKHRGKLSSDGNETSPAEGEP). Residues 120-131 (PEKENRPPGWER) are compositionally biased toward basic and acidic residues. Basic residues-rich tracts occupy residues 132-145 (TRKRSREHKRRRDR) and 249-258 (AKKKEKHRGK). N-linked (GlcNAc...) asparagine glycosylation occurs at asparagine 264.

It belongs to the draxin family. Interacts with LRP6.

It localises to the secreted. Chemorepulsive axon guidance protein required for the development of spinal cord and forebrain commissures. Acts as a chemorepulsive guidance protein for commissural axons during development. Able to inhibit or repel neurite outgrowth from dorsal spinal cord. Inhibits the stabilization of cytosolic beta-catenin (CTNNB1) via its interaction with LRP6, thereby acting as an antagonist of Wnt signaling pathway. This chain is Draxin, found in Homo sapiens (Human).